Consider the following 1004-residue polypeptide: Ephrin type-B receptor 2 (1004 aa).

Positions 1-19 (MGPLWFCCLPLALLPLLAA) are cleaved as a signal peptide. At 20–544 (VEETLMDSTT…QTSVQEKLPL (525 aa)) the chain is on the extracellular side. The region spanning 21–203 (EETLMDSTTA…FYRKCPRVIQ (183 aa)) is the Eph LBD domain. 2 cysteine pairs are disulfide-bonded: cysteine 63–cysteine 185 and cysteine 98–cysteine 108. Asparagine 266, asparagine 337, asparagine 429, asparagine 478, and asparagine 483 each carry an N-linked (GlcNAc...) asparagine glycan. Fibronectin type-III domains lie at 325–435 (IPSA…TNQA) and 436–531 (APSA…TMTE). A helical membrane pass occupies residues 545-565 (IIGSSAAGLVFLIAVVVIIIV). The Cytoplasmic portion of the chain corresponds to 566–1004 (CNRRRGFERA…QMNQIQSVEV (439 aa)). The 264-residue stretch at 639–902 (VKIEQVIGAG…QIVNTLDKMI (264 aa)) folds into the Protein kinase domain. Residues 645–653 (IGAGEFGEV) and lysine 671 contribute to the ATP site. The Proton acceptor role is filled by aspartate 764. The region spanning 931-995 (TSFNTVDEWL…LNSIQVMRAQ (65 aa)) is the SAM domain. Residues 1002 to 1004 (VEV) carry the PDZ-binding motif.

This sequence belongs to the protein kinase superfamily. Tyr protein kinase family. Ephrin receptor subfamily. In terms of assembly, heterotetramer upon binding of the ligand. The heterotetramer is composed of an ephrin dimer and a receptor dimer. Oligomerization is probably required to induce biological responses. Post-translationally, ligand binding induces cleavage by matrix metalloproteinases (MMPs) such as MMP7/MMP9, producing an EphB2/N-terminal fragment (NTF) and a C-terminal long fragment (EphB2-LF). EphB2-LF is further cleaved by MMPs, producing EphB2/CTF1 which is further cleaved by the PS1/gamma-secretase producing EphB2/CTF2. Wide tissue distribution throughout development and sustained expression in adult brain. The longer form (CEK5+) is specifically expressed in the central nervous system.

The protein localises to the cell membrane. Its subcellular location is the cell projection. It localises to the axon. The protein resides in the dendrite. It catalyses the reaction L-tyrosyl-[protein] + ATP = O-phospho-L-tyrosyl-[protein] + ADP + H(+). Its function is as follows. Receptor tyrosine kinase which binds promiscuously transmembrane ephrin-B family ligands residing on adjacent cells, leading to contact-dependent bidirectional signaling into neighboring cells. The signaling pathway downstream of the receptor is referred to as forward signaling while the signaling pathway downstream of the ephrin ligand is referred to as reverse signaling. Functions in axon guidance during development. In addition to axon guidance, also regulates dendritic spines development and maturation and stimulates the formation of excitatory synapses. This Gallus gallus (Chicken) protein is Ephrin type-B receptor 2 (EPHB2).